The following is a 233-amino-acid chain: Large ribosomal subunit protein uL1 (233 aa).

This sequence belongs to the universal ribosomal protein uL1 family. In terms of assembly, part of the 50S ribosomal subunit.

Binds directly to 23S rRNA. The L1 stalk is quite mobile in the ribosome, and is involved in E site tRNA release. Functionally, protein L1 is also a translational repressor protein, it controls the translation of the L11 operon by binding to its mRNA. In Aeromonas hydrophila subsp. hydrophila (strain ATCC 7966 / DSM 30187 / BCRC 13018 / CCUG 14551 / JCM 1027 / KCTC 2358 / NCIMB 9240 / NCTC 8049), this protein is Large ribosomal subunit protein uL1.